Here is a 138-residue protein sequence, read N- to C-terminus: Nucleoside diphosphate kinase (138 aa).

Lys-10, Phe-58, Arg-86, Thr-92, Arg-103, and Asn-113 together coordinate ATP. The active-site Pros-phosphohistidine intermediate is the His-116.

It belongs to the NDK family. As to quaternary structure, homotetramer. The cofactor is Mg(2+).

The protein resides in the cytoplasm. It catalyses the reaction a 2'-deoxyribonucleoside 5'-diphosphate + ATP = a 2'-deoxyribonucleoside 5'-triphosphate + ADP. The enzyme catalyses a ribonucleoside 5'-diphosphate + ATP = a ribonucleoside 5'-triphosphate + ADP. Its function is as follows. Major role in the synthesis of nucleoside triphosphates other than ATP. The ATP gamma phosphate is transferred to the NDP beta phosphate via a ping-pong mechanism, using a phosphorylated active-site intermediate. In Haemophilus ducreyi (strain 35000HP / ATCC 700724), this protein is Nucleoside diphosphate kinase.